A 38-amino-acid polypeptide reads, in one-letter code: Photosystem II reaction center protein L (38 aa).

A helical transmembrane segment spans residues 17 to 37; the sequence is SLYWGLLLIFVLAVLFSNYFF.

This sequence belongs to the PsbL family. PSII is composed of 1 copy each of membrane proteins PsbA, PsbB, PsbC, PsbD, PsbE, PsbF, PsbH, PsbI, PsbJ, PsbK, PsbL, PsbM, PsbT, PsbX, PsbY, PsbZ, Psb30/Ycf12, at least 3 peripheral proteins of the oxygen-evolving complex and a large number of cofactors. It forms dimeric complexes.

Its subcellular location is the plastid. The protein resides in the chloroplast thylakoid membrane. In terms of biological role, one of the components of the core complex of photosystem II (PSII). PSII is a light-driven water:plastoquinone oxidoreductase that uses light energy to abstract electrons from H(2)O, generating O(2) and a proton gradient subsequently used for ATP formation. It consists of a core antenna complex that captures photons, and an electron transfer chain that converts photonic excitation into a charge separation. This subunit is found at the monomer-monomer interface and is required for correct PSII assembly and/or dimerization. The chain is Photosystem II reaction center protein L from Psilotum nudum (Whisk fern).